The following is an 859-amino-acid chain: Probable helicase A859L (859 aa).

Residues 178-349 form the Helicase ATP-binding domain; that stretch reads YQELRRSGRA…KNRELFGGVA (172 aa). ATP is bound at residue 191–198; the sequence is MACRCGKT. Positions 298–301 match the DEAH box motif; the sequence is DECH. One can recognise a Helicase C-terminal domain in the interval 394-553; sequence QIIMALAYLK…RFYEHLLNPS (160 aa).

The protein belongs to the asfivirus helicase A859L family.

The sequence is that of Probable helicase A859L from Ornithodoros (relapsing fever ticks).